Consider the following 473-residue polypeptide: ATP synthase subunit beta (473 aa).

153 to 160 (GGAGVGKT) provides a ligand contact to ATP.

It belongs to the ATPase alpha/beta chains family. In terms of assembly, F-type ATPases have 2 components, CF(1) - the catalytic core - and CF(0) - the membrane proton channel. CF(1) has five subunits: alpha(3), beta(3), gamma(1), delta(1), epsilon(1). CF(0) has three main subunits: a(1), b(2) and c(9-12). The alpha and beta chains form an alternating ring which encloses part of the gamma chain. CF(1) is attached to CF(0) by a central stalk formed by the gamma and epsilon chains, while a peripheral stalk is formed by the delta and b chains.

The protein localises to the cell inner membrane. It catalyses the reaction ATP + H2O + 4 H(+)(in) = ADP + phosphate + 5 H(+)(out). Produces ATP from ADP in the presence of a proton gradient across the membrane. The catalytic sites are hosted primarily by the beta subunits. The chain is ATP synthase subunit beta from Rickettsia massiliae (strain Mtu5).